Consider the following 298-residue polypeptide: Glycine--tRNA ligase alpha subunit (298 aa).

The protein belongs to the class-II aminoacyl-tRNA synthetase family. Tetramer of two alpha and two beta subunits.

The protein resides in the cytoplasm. It catalyses the reaction tRNA(Gly) + glycine + ATP = glycyl-tRNA(Gly) + AMP + diphosphate. The chain is Glycine--tRNA ligase alpha subunit from Gloeothece citriformis (strain PCC 7424) (Cyanothece sp. (strain PCC 7424)).